We begin with the raw amino-acid sequence, 477 residues long: Glutamate--tRNA ligase (477 aa).

Positions 8–18 (PSPTGTLHIGT) match the 'HIGH' region motif. The 'KMSKS' region motif lies at 247 to 251 (KLSKR). Lys-250 contributes to the ATP binding site.

This sequence belongs to the class-I aminoacyl-tRNA synthetase family. Glutamate--tRNA ligase type 1 subfamily. In terms of assembly, monomer.

It is found in the cytoplasm. The enzyme catalyses tRNA(Glu) + L-glutamate + ATP = L-glutamyl-tRNA(Glu) + AMP + diphosphate. Functionally, catalyzes the attachment of glutamate to tRNA(Glu) in a two-step reaction: glutamate is first activated by ATP to form Glu-AMP and then transferred to the acceptor end of tRNA(Glu). The polypeptide is Glutamate--tRNA ligase (Synechococcus sp. (strain CC9605)).